Here is a 299-residue protein sequence, read N- to C-terminus: HTH-type transcriptional regulator PgrR (299 aa).

Residues 4-61 form the HTH lysR-type domain; that stretch reads EEIADLMAFVVVAEERSFTRAAARLSMAQSALSQIVRRIEERLGLRLLTRTTRSVVPT. Residues 21–40 constitute a DNA-binding region (H-T-H motif); sequence FTRAAARLSMAQSALSQIVR.

This sequence belongs to the LysR transcriptional regulatory family.

Functionally, regulates the expression of genes involved in peptidoglycan (PG) degradation. Could play a role in switch control between recycling and degradation of PG peptides. Negatively regulates the expression of the ycjY-ymjD-ymjC-mpaA operon by binding to the PgrR-box. In addition, other genes are predicted to be under the control of PgrR, including genes related to membrane formation and function. This Escherichia coli (strain K12) protein is HTH-type transcriptional regulator PgrR (pgrR).